Consider the following 141-residue polypeptide: MAKKVVGYIKLQIPAGKATPAPPVGPALGQHGVNIMAFCKEFNERTAKDAGLVIPVVITVYADRSFSFVTKTPPASVLIKRACKIEKGSGRPNREKVAKISKEEVRKIAEMKMPDLNAASLEAAMSMIAGTARSMGVVVED.

The protein belongs to the universal ribosomal protein uL11 family. As to quaternary structure, part of the ribosomal stalk of the 50S ribosomal subunit. Interacts with L10 and the large rRNA to form the base of the stalk. L10 forms an elongated spine to which L12 dimers bind in a sequential fashion forming a multimeric L10(L12)X complex. One or more lysine residues are methylated.

In terms of biological role, forms part of the ribosomal stalk which helps the ribosome interact with GTP-bound translation factors. In Acetivibrio thermocellus (strain ATCC 27405 / DSM 1237 / JCM 9322 / NBRC 103400 / NCIMB 10682 / NRRL B-4536 / VPI 7372) (Clostridium thermocellum), this protein is Large ribosomal subunit protein uL11.